We begin with the raw amino-acid sequence, 297 residues long: Phosphoribosylaminoimidazole-succinocarboxamide synthase (297 aa).

It belongs to the SAICAR synthetase family.

The enzyme catalyses 5-amino-1-(5-phospho-D-ribosyl)imidazole-4-carboxylate + L-aspartate + ATP = (2S)-2-[5-amino-1-(5-phospho-beta-D-ribosyl)imidazole-4-carboxamido]succinate + ADP + phosphate + 2 H(+). It participates in purine metabolism; IMP biosynthesis via de novo pathway; 5-amino-1-(5-phospho-D-ribosyl)imidazole-4-carboxamide from 5-amino-1-(5-phospho-D-ribosyl)imidazole-4-carboxylate: step 1/2. The sequence is that of Phosphoribosylaminoimidazole-succinocarboxamide synthase from Corynebacterium urealyticum (strain ATCC 43042 / DSM 7109).